Reading from the N-terminus, the 550-residue chain is Chaperonin GroEL (550 aa).

Residues 30 to 33 (TLGP), K51, 87 to 91 (DGTTT), G415, and D496 contribute to the ATP site.

It belongs to the chaperonin (HSP60) family. Forms a cylinder of 14 subunits composed of two heptameric rings stacked back-to-back. Interacts with the co-chaperonin GroES.

The protein resides in the cytoplasm. The catalysed reaction is ATP + H2O + a folded polypeptide = ADP + phosphate + an unfolded polypeptide.. Its function is as follows. Together with its co-chaperonin GroES, plays an essential role in assisting protein folding. The GroEL-GroES system forms a nano-cage that allows encapsulation of the non-native substrate proteins and provides a physical environment optimized to promote and accelerate protein folding. This is Chaperonin GroEL from Rickettsia prowazekii (strain Madrid E).